The sequence spans 130 residues: Small ribosomal subunit protein uS11c (130 aa).

It belongs to the universal ribosomal protein uS11 family. As to quaternary structure, part of the 30S ribosomal subunit.

It is found in the plastid. The protein localises to the chloroplast. The polypeptide is Small ribosomal subunit protein uS11c (Pyropia yezoensis (Susabi-nori)).